Reading from the N-terminus, the 176-residue chain is Large ribosomal subunit protein uL10 (176 aa).

This sequence belongs to the universal ribosomal protein uL10 family. Part of the ribosomal stalk of the 50S ribosomal subunit. The N-terminus interacts with L11 and the large rRNA to form the base of the stalk. The C-terminus forms an elongated spine to which L12 dimers bind in a sequential fashion forming a multimeric L10(L12)X complex.

In terms of biological role, forms part of the ribosomal stalk, playing a central role in the interaction of the ribosome with GTP-bound translation factors. The protein is Large ribosomal subunit protein uL10 of Carboxydothermus hydrogenoformans (strain ATCC BAA-161 / DSM 6008 / Z-2901).